We begin with the raw amino-acid sequence, 360 residues long: DNA replication and repair protein RecF (360 aa).

30-37 (GHNGSGKT) contacts ATP.

Belongs to the RecF family.

The protein resides in the cytoplasm. Its function is as follows. The RecF protein is involved in DNA metabolism; it is required for DNA replication and normal SOS inducibility. RecF binds preferentially to single-stranded, linear DNA. It also seems to bind ATP. This is DNA replication and repair protein RecF from Shewanella sediminis (strain HAW-EB3).